The sequence spans 77 residues: Putative defensin-like protein 162 (77 aa).

The signal sequence occupies residues 1-27; that stretch reads MAKQLCSYMFISMFILSAFLALPSAEG. Cystine bridges form between C34/C77, C44/C63, C49/C71, and C53/C73.

It belongs to the DEFL family.

It is found in the secreted. The protein is Putative defensin-like protein 162 (LCR37) of Arabidopsis thaliana (Mouse-ear cress).